The sequence spans 561 residues: MSTERTSWTSLSTIQKIALGLGIPASATVAYILYRRYRESREERLTFVGEDDIEIEMRVPQEAVKLIIGRQGANIKQLRKQTGARIDVDTEDVGDERVLLISGFPVQVCKAKAAIHQILTENTPVSEQLSVPQRSVGRIIGRGGETIRSICKASGAKITCDKESEGTLLLSRLIKISGTQKEVAAAKHLILEKVSEDEELRKRIAHSAETRVPRKQPISVRREDMTEPGGAGEPALWKNTSSSMEPTAPLVTPPPKGGGDMAVVVSKEGSWEKPSDDSFQKSEAQAIPEMPMFEIPSPDFSFHADEYLEVYVSASEHPNHFWIQIVGSRSLQLDKLVNEMTQHYENSVPEDLTVHVGDIVAAPLPTNGSWYRARVLGTLENGNLDLYFVDFGDNGDCPLKDLRALRSDFLSLPFQAIECSLARIAPSGDQWEEEALDEFDRLTHCADWKPLVAKISSYVQTGISTWPKIYLYDTSNGKKLDIGLELVHKGYAIELPEDIEENRAVPDMLKDMATETDASLSTLLTETKKSSGEITHTLSCLSLSEAASMSGDDNLEDDYLL.

2 KH domains span residues 52-115 and 124-190; these read DIEI…KAAI and PVSE…KHLI. Glycyl lysine isopeptide (Lys-Gly) (interchain with G-Cter in ubiquitin) cross-links involve residues Lys-65, Lys-76, Lys-110, Lys-112, Lys-152, Lys-175, Lys-181, Lys-187, Lys-193, Lys-256, and Lys-267. The interval 219–262 is disordered; it reads SVRREDMTEPGGAGEPALWKNTSSSMEPTAPLVTPPPKGGGDMA. Ser-278 carries the phosphoserine modification. The Tudor domain maps to 353-412; sequence TVHVGDIVAAPLPTNGSWYRARVLGTLENGNLDLYFVDFGDNGDCPLKDLRALRSDFLSL. Glycyl lysine isopeptide (Lys-Gly) (interchain with G-Cter in ubiquitin) cross-links involve residues Lys-479, Lys-510, and Lys-529.

This sequence belongs to the Tdrkh family. As to quaternary structure, interacts with (symmetrically methylated) PIWIL1, PIWIL2 and PIWIL4. Post-translationally, ubiquitinated by PRKN during mitophagy, leading to its degradation and enhancement of mitophagy. Deubiquitinated by USP30.

It localises to the cytoplasm. It is found in the mitochondrion. Functionally, participates in the primary piRNA biogenesis pathway and is required during spermatogenesis to repress transposable elements and prevent their mobilization, which is essential for the germline integrity. The piRNA metabolic process mediates the repression of transposable elements during meiosis by forming complexes composed of piRNAs and Piwi proteins and govern the methylation and subsequent repression of transposons. Required for the final steps of primary piRNA biogenesis by participating in the processing of 31-37 nt intermediates into mature piRNAs. May act in pi-bodies and piP-bodies by transferring piRNA precursors or intermediates to or between these granules. The chain is Tudor and KH domain-containing protein (TDRKH) from Homo sapiens (Human).